A 104-amino-acid chain; its full sequence is Large ribosomal subunit protein bL21 (104 aa).

The segment covering 81–90 (QGYRRHHGHR) has biased composition (basic residues). A disordered region spans residues 81-104 (QGYRRHHGHRQPYTQVKITGISAG).

Belongs to the bacterial ribosomal protein bL21 family. As to quaternary structure, part of the 50S ribosomal subunit. Contacts protein L20.

Functionally, this protein binds to 23S rRNA in the presence of protein L20. The polypeptide is Large ribosomal subunit protein bL21 (Halorhodospira halophila (strain DSM 244 / SL1) (Ectothiorhodospira halophila (strain DSM 244 / SL1))).